Reading from the N-terminus, the 387-residue chain is 3-ketoacyl-CoA thiolase (387 aa).

Cys91 (acyl-thioester intermediate) is an active-site residue. Catalysis depends on proton acceptor residues His343 and Cys373.

Belongs to the thiolase-like superfamily. Thiolase family. Heterotetramer of two alpha chains (FadB) and two beta chains (FadA).

The protein resides in the cytoplasm. It carries out the reaction an acyl-CoA + acetyl-CoA = a 3-oxoacyl-CoA + CoA. Its pathway is lipid metabolism; fatty acid beta-oxidation. Functionally, catalyzes the final step of fatty acid oxidation in which acetyl-CoA is released and the CoA ester of a fatty acid two carbons shorter is formed. This chain is 3-ketoacyl-CoA thiolase, found in Shewanella oneidensis (strain ATCC 700550 / JCM 31522 / CIP 106686 / LMG 19005 / NCIMB 14063 / MR-1).